The primary structure comprises 272 residues: Shikimate dehydrogenase (NADP(+)) (272 aa).

Residues 14–16 (SKS) and Thr-61 contribute to the shikimate site. The Proton acceptor role is filled by Lys-65. Glu-77 is an NADP(+) binding site. Shikimate-binding residues include Asn-86 and Asp-102. Residues 126-130 (GAGGA), 149-154 (NRTASR), and Met-213 each bind NADP(+). Residue Tyr-215 coordinates shikimate. Residue Gly-237 coordinates NADP(+).

Belongs to the shikimate dehydrogenase family. As to quaternary structure, homodimer.

It carries out the reaction shikimate + NADP(+) = 3-dehydroshikimate + NADPH + H(+). Its pathway is metabolic intermediate biosynthesis; chorismate biosynthesis; chorismate from D-erythrose 4-phosphate and phosphoenolpyruvate: step 4/7. Functionally, involved in the biosynthesis of the chorismate, which leads to the biosynthesis of aromatic amino acids. Catalyzes the reversible NADPH linked reduction of 3-dehydroshikimate (DHSA) to yield shikimate (SA). This chain is Shikimate dehydrogenase (NADP(+)), found in Salmonella choleraesuis (strain SC-B67).